The primary structure comprises 1409 residues: Copia protein (1409 aa).

Residues Val-230–His-247 form a CCHC-type zinc finger. Residue Asp-292 is the For protease activity of the active site. The Integrase catalytic domain maps to His-476–Lys-644. Disordered stretches follow at residues Ser-760–Phe-780 and Asn-805–Ile-851. Positions Glu-827–Gly-841 are enriched in basic and acidic residues.

This is Copia protein (GIP) from Drosophila melanogaster (Fruit fly).